The primary structure comprises 574 residues: Thiol:disulfide interchange protein DsbD (574 aa).

The N-terminal stretch at 1-19 (MAHRILTLILLFCSAHASA) is a signal peptide. A disulfide bridge connects residues Cys-122 and Cys-128. Residues 147–169 (VKANAATPSAATGEQTRVNSDSP) form a disordered region. A compositionally biased stretch (polar residues) spans 152 to 169 (ATPSAATGEQTRVNSDSP). 7 helical membrane-spanning segments follow: residues 173–193 (LPFS…TPCV), 218–238 (LLAF…GLVV), 253–273 (WVLV…FGLF), 306–326 (IAGL…LLYI), 333–353 (WLGG…LILV), 367–387 (WMEQ…VFLL), and 399–419 (LWSV…LNAT). Cysteines 192 and 314 form a disulfide. The region spanning 430–574 (LLGAAMICAR…FATHLHNRLR (145 aa)) is the Thioredoxin domain. Residues Cys-489 and Cys-492 are joined by a disulfide bond.

Belongs to the thioredoxin family. DsbD subfamily.

Its subcellular location is the cell inner membrane. The enzyme catalyses [protein]-dithiol + NAD(+) = [protein]-disulfide + NADH + H(+). It carries out the reaction [protein]-dithiol + NADP(+) = [protein]-disulfide + NADPH + H(+). Required to facilitate the formation of correct disulfide bonds in some periplasmic proteins and for the assembly of the periplasmic c-type cytochromes. Acts by transferring electrons from cytoplasmic thioredoxin to the periplasm. This transfer involves a cascade of disulfide bond formation and reduction steps. The protein is Thiol:disulfide interchange protein DsbD of Cronobacter sakazakii (strain ATCC BAA-894) (Enterobacter sakazakii).